Here is a 330-residue protein sequence, read N- to C-terminus: Polygalacturonase inhibitor 2 (330 aa).

A signal peptide spans 1-21 (MDKTMTLFLLLSTLLLTTSLA). Disulfide bonds link cysteine 25/cysteine 55 and cysteine 56/cysteine 63. 10 LRR repeats span residues 69–93 (NHRVTSLIIQDGEISGQIPPEVGDL), 94–117 (PYLTSLIFRKLTNLTGHIQPTIAK), 118–141 (LKNLTFLRLSWTNLTGPVPEFLSQ), 142–166 (LKNLEYIDLSFNDLSGSIPSSLSSL), 167–192 (RKLEYLELSRNKLTGPIPESFGTFSG), 194–215 (VPSLFLSHNQLSGTIPKSLGNP), 217–237 (FYRIDLSRNKLQGDASILFGA), 238–260 (KKTTWIVDISRNMFQFDLSKVKL), 261–285 (AKTLNNLDMNHNGITGSIPAEWSKA), and 287–308 (FQLLNVSYNRLCGRIPKGEYIQ). N-linked (GlcNAc...) asparagine glycosylation is found at asparagine 106, asparagine 120, and asparagine 130. Asparagine 291 is a glycosylation site (N-linked (GlcNAc...) asparagine). Cystine bridges form between cysteine 298–cysteine 320 and cysteine 322–cysteine 329.

The protein belongs to the polygalacturonase-inhibiting protein family.

It localises to the secreted. Its subcellular location is the cell wall. The protein localises to the membrane. Inhibitor of fungal polygalacturonase. It is an important factor for plant resistance to phytopathogenic fungi. The polypeptide is Polygalacturonase inhibitor 2 (PGIP2) (Arabidopsis thaliana (Mouse-ear cress)).